We begin with the raw amino-acid sequence, 124 residues long: Ribulose bisphosphate carboxylase small subunit (124 aa).

The protein belongs to the RuBisCO small chain family. In terms of assembly, heterohexadecamer of 8 large and 8 small subunits.

Its function is as follows. RuBisCO catalyzes two reactions: the carboxylation of D-ribulose 1,5-bisphosphate, the primary event in carbon dioxide fixation, as well as the oxidative fragmentation of the pentose substrate. Both reactions occur simultaneously and in competition at the same active site. Although the small subunit is not catalytic it is essential for maximal activity. In Hydrogenophilus thermoluteolus (Pseudomonas hydrogenothermophila), this protein is Ribulose bisphosphate carboxylase small subunit.